Here is a 342-residue protein sequence, read N- to C-terminus: UDP-N-acetylglucosamine--N-acetylmuramyl-(pentapeptide) pyrophosphoryl-undecaprenol N-acetylglucosamine transferase (342 aa).

Residues 10 to 12 (TGG), Asn-124, Ser-177, and Gln-275 contribute to the UDP-N-acetyl-alpha-D-glucosamine site.

The protein belongs to the glycosyltransferase 28 family. MurG subfamily.

It localises to the cell inner membrane. The enzyme catalyses di-trans,octa-cis-undecaprenyl diphospho-N-acetyl-alpha-D-muramoyl-L-alanyl-D-glutamyl-meso-2,6-diaminopimeloyl-D-alanyl-D-alanine + UDP-N-acetyl-alpha-D-glucosamine = di-trans,octa-cis-undecaprenyl diphospho-[N-acetyl-alpha-D-glucosaminyl-(1-&gt;4)]-N-acetyl-alpha-D-muramoyl-L-alanyl-D-glutamyl-meso-2,6-diaminopimeloyl-D-alanyl-D-alanine + UDP + H(+). Its pathway is cell wall biogenesis; peptidoglycan biosynthesis. Functionally, cell wall formation. Catalyzes the transfer of a GlcNAc subunit on undecaprenyl-pyrophosphoryl-MurNAc-pentapeptide (lipid intermediate I) to form undecaprenyl-pyrophosphoryl-MurNAc-(pentapeptide)GlcNAc (lipid intermediate II). This Campylobacter jejuni subsp. doylei (strain ATCC BAA-1458 / RM4099 / 269.97) protein is UDP-N-acetylglucosamine--N-acetylmuramyl-(pentapeptide) pyrophosphoryl-undecaprenol N-acetylglucosamine transferase.